A 351-amino-acid chain; its full sequence is Muscleblind-like protein 2a (351 aa).

4 C3H1-type zinc fingers span residues 13–41 (WLTL…HPPK), 47–73 (NGRV…HPPA), 177–205 (TDKL…HPSD), and 213–239 (DNTV…HPPA).

Belongs to the muscleblind family. In terms of tissue distribution, expressed in fast and slow myotomal muscle, heart, liver, skin, brain and testis.

It is found in the nucleus. The protein localises to the cytoplasm. Its function is as follows. Involved in pre-mRNA alternative splicing regulation. RNA-binding protein that binds to 5'ACACCC-3' core sequence. This is Muscleblind-like protein 2a (mbnl2a) from Takifugu rubripes (Japanese pufferfish).